The sequence spans 347 residues: Chaperone protein DnaJ 1 (347 aa).

The J domain maps to 5–75 (DPHSLLGLSP…PAAAPHDAQA (71 aa)). Positions 68 to 77 (AAPHDAQAAD) are enriched in low complexity. The segment at 68–91 (AAPHDAQAADARPEPPPEAPPRGA) is disordered. Residues 107-181 (GGEKAFTIAD…CHGSGQARAA (75 aa)) form a CR-type zinc finger. Residues cysteine 120, cysteine 123, cysteine 137, cysteine 140, cysteine 155, cysteine 158, cysteine 169, and cysteine 172 each contribute to the Zn(2+) site. 4 CXXCXGXG motif repeats span residues 120-127 (CGACGGSG), 137-144 (CATCHGSG), 155-162 (CADCAGRG), and 169-176 (CGACHGSG).

The protein belongs to the DnaJ family. As to quaternary structure, homodimer. Zn(2+) serves as cofactor.

It is found in the cytoplasm. Its function is as follows. Participates actively in the response to hyperosmotic and heat shock by preventing the aggregation of stress-denatured proteins and by disaggregating proteins, also in an autonomous, DnaK-independent fashion. Unfolded proteins bind initially to DnaJ; upon interaction with the DnaJ-bound protein, DnaK hydrolyzes its bound ATP, resulting in the formation of a stable complex. GrpE releases ADP from DnaK; ATP binding to DnaK triggers the release of the substrate protein, thus completing the reaction cycle. Several rounds of ATP-dependent interactions between DnaJ, DnaK and GrpE are required for fully efficient folding. Also involved, together with DnaK and GrpE, in the DNA replication of plasmids through activation of initiation proteins. The chain is Chaperone protein DnaJ 1 from Aromatoleum aromaticum (strain DSM 19018 / LMG 30748 / EbN1) (Azoarcus sp. (strain EbN1)).